The chain runs to 66 residues: UPF0337 protein M6_Spy1542 (66 aa).

Residues 1-10 show a composition bias toward basic and acidic residues; sequence MSEEKLKAKV. Residues 1 to 22 form a disordered region; the sequence is MSEEKLKAKVEQASGSLKEGAG.

The protein belongs to the UPF0337 (CsbD) family.

The sequence is that of UPF0337 protein M6_Spy1542 from Streptococcus pyogenes serotype M6 (strain ATCC BAA-946 / MGAS10394).